We begin with the raw amino-acid sequence, 551 residues long: Solute carrier family 22 member 6 (551 aa).

The Cytoplasmic segment spans residues 1–9; the sequence is MAFNDLLKQ. A helical transmembrane segment spans residues 10–30; that stretch reads VGGVGRFQLIQVTMVVAPLLL. At 31 to 135 the chain is on the extracellular side; that stretch reads MASHNTLQNF…LVCSHRAFRQ (105 aa). 4 N-linked (GlcNAc...) asparagine glycosylation sites follow: N39, N56, N92, and N113. A helical membrane pass occupies residues 136-156; it reads LAQSLYMVGVLLGAMVFGYLA. Residues 157–164 are Cytoplasmic-facing; that stretch reads DRLGRRKV. Residues 165–187 form a helical membrane-spanning segment; the sequence is LILNYLQTAVSGTCAAYAPNYTV. Residues 188–195 lie on the Extracellular side of the membrane; that stretch reads YCVFRLLS. A helical membrane pass occupies residues 196-216; the sequence is GMSLASIAINCMTLNVEWMPI. Topologically, residues 217–224 are cytoplasmic; that stretch reads HTRAYVGT. A helical membrane pass occupies residues 225 to 245; that stretch reads LIGYVYSLGQFLLAGIAYAVP. Residues 246-248 lie on the Extracellular side of the membrane; the sequence is HWR. A helical transmembrane segment spans residues 249-269; sequence HLQLVVSVPFFIAFIYSWFFI. At 270 to 337 the chain is on the cytoplasmic side; that stretch reads ESARWYSSSG…ELLRCPTLRH (68 aa). Residues 338–358 form a helical membrane-spanning segment; sequence LFLCLSMLWFATSFAYYGLVM. The Extracellular portion of the chain corresponds to 359–368; it reads DLQGFGVSMY. A helical membrane pass occupies residues 369-389; sequence LIQVIFGAVDLPAKFVCFLVI. Topologically, residues 390-395 are cytoplasmic; it reads NSMGRR. A helical transmembrane segment spans residues 396–416; that stretch reads PAQMASLLLAGICILVNGIIP. The Extracellular portion of the chain corresponds to 417–425; it reads KSHTIIRTS. A helical transmembrane segment spans residues 426-446; the sequence is LAVLGKGCLASSFNCIFLYTG. At 447-484 the chain is on the cytoplasmic side; the sequence is ELYPTVIRQTGLGMGSTMARVGSIVSPLVSMTAEFYPS. Residues 485–505 traverse the membrane as a helical segment; sequence MPLFIFGAVPVVASAVTALLP. The Extracellular segment spans residues 506-551; it reads ETLGQPLPDTVQDLKSRSRGKQNQQQQEQQKQMMPLQASTQEKNGL. The interval 514–551 is disordered; it reads DTVQDLKSRSRGKQNQQQQEQQKQMMPLQASTQEKNGL. Over residues 526–537 the composition is skewed to low complexity; sequence KQNQQQQEQQKQ. Positions 542-551 are enriched in polar residues; the sequence is QASTQEKNGL.

The protein belongs to the major facilitator (TC 2.A.1) superfamily. Organic cation transporter (TC 2.A.1.19) family. Post-translationally, glycosylated. Glycosylation is necessary for proper targeting of the transporter to the plasma membrane. In terms of tissue distribution, highly expressed in kidney; in the particular segment of the proximal tubule. In kidney, found preferentially in the cortex and outer medulla and weakly in the inner medulla. Expressed to a lower extent in brain.

The protein resides in the cell membrane. The protein localises to the basolateral cell membrane. Its subcellular location is the basal cell membrane. The catalysed reaction is (6R)-L-erythro-5,6,7,8-tetrahydrobiopterin(out) + a dicarboxylate(in) = (6R)-L-erythro-5,6,7,8-tetrahydrobiopterin(in) + a dicarboxylate(out). It catalyses the reaction L-erythro-7,8-dihydrobiopterin(out) + a dicarboxylate(in) = L-erythro-7,8-dihydrobiopterin(in) + a dicarboxylate(out). It carries out the reaction L-sepiapterin(out) + a dicarboxylate(in) = L-sepiapterin(in) + a dicarboxylate(out). The enzyme catalyses prostaglandin F2alpha(out) + a dicarboxylate(in) = prostaglandin F2alpha(in) + a dicarboxylate(out). The catalysed reaction is prostaglandin E2(out) + a dicarboxylate(in) = prostaglandin E2(in) + a dicarboxylate(out). It catalyses the reaction 3',5'-cyclic AMP(out) + a dicarboxylate(in) = 3',5'-cyclic AMP(in) + a dicarboxylate(out). It carries out the reaction 3',5'-cyclic GMP(out) + a dicarboxylate(in) = 3',5'-cyclic GMP(in) + a dicarboxylate(out). The enzyme catalyses urate(out) + a dicarboxylate(in) = urate(in) + a dicarboxylate(out). The catalysed reaction is kynurenate(out) + glutarate(in) = kynurenate(in) + glutarate(out). It catalyses the reaction (indol-3-yl)acetate(out) + a dicarboxylate(in) = (indol-3-yl)acetate(in) + a dicarboxylate(out). It carries out the reaction indoxyl sulfate(out) + a dicarboxylate(in) = indoxyl sulfate(in) + a dicarboxylate(out). The enzyme catalyses N-benzoylglycine(out) + a dicarboxylate(in) = N-benzoylglycine(in) + a dicarboxylate(out). The catalysed reaction is 3-carboxy-4-methyl-5-propyl-2-furanpropanoate(out) + a dicarboxylate(in) = 3-carboxy-4-methyl-5-propyl-2-furanpropanoate(in) + a dicarboxylate(out). Secondary active transporter that functions as a Na(+)-independent organic anion (OA)/dicarboxylate antiporter where the uptake of one molecule of OA into the cell is coupled with an efflux of one molecule of intracellular dicarboxylate such as alpha-ketoglutarate or glutarate. Mediates the uptake of OA across the basolateral side of proximal tubule epithelial cells, thereby contributing to the renal elimination of endogenous OA from the systemic circulation into the urine. Function as a biopterin transporters involved in the uptake and the secretion of coenzymes tetrahydrobiopterin (BH4) dihydrobiopterin (BH2) and sepiapterin to urine, thereby determining baseline levels of blood biopterins. Transports prostaglandin E2 (PGE2) and prostaglandin F2-alpha (PGF2-alpha) and may contribute to their renal excretion. Also mediates the uptake of cyclic nucleotides such as cAMP and cGMP. Involved in the transport of neuroactive tryptophan metabolites kynurenate (KYNA) and xanthurenate (XA) and may contribute to their secretion from the brain. May transport glutamate. Also involved in the disposition of uremic toxins and potentially toxic xenobiotics by the renal organic anion secretory pathway, helping reduce their undesired toxicological effects on the body. Uremic toxins include the indoxyl sulfate (IS), hippurate, indole acetate (IA), 3-carboxy-4- methyl-5-propyl-2-furanpropionate(CMPF) and urate. Xenobiotics include the mycotoxin ochratoxin (OTA). May also contribute to the transport of organic compounds in testes across the blood-testis-barrier. May also work as a bidirectional OA/dicarboxylate exchanger. The polypeptide is Solute carrier family 22 member 6 (Rattus norvegicus (Rat)).